The following is a 340-amino-acid chain: Serpentine receptor class alpha-18 (340 aa).

The next 6 membrane-spanning stretches (helical) occupy residues 29-49, 109-129, 149-169, 198-218, 249-269, and 285-305; these read FNFI…WLAI, VFEL…VFSL, FIAT…FYIV, VRTG…YVCV, ISIV…NLLI, and IVSF…VIYF.

Belongs to the nematode receptor-like protein sra family.

It localises to the membrane. The protein is Serpentine receptor class alpha-18 (sra-18) of Caenorhabditis elegans.